The following is a 202-amino-acid chain: Small ribosomal subunit protein uS4 (202 aa).

Positions 93–156 (RRLDNMVYRL…KDLKIISEAV (64 aa)) constitute an S4 RNA-binding domain.

This sequence belongs to the universal ribosomal protein uS4 family. Part of the 30S ribosomal subunit. Contacts protein S5. The interaction surface between S4 and S5 is involved in control of translational fidelity.

Its function is as follows. One of the primary rRNA binding proteins, it binds directly to 16S rRNA where it nucleates assembly of the body of the 30S subunit. With S5 and S12 plays an important role in translational accuracy. The chain is Small ribosomal subunit protein uS4 from Pediococcus pentosaceus (strain ATCC 25745 / CCUG 21536 / LMG 10740 / 183-1w).